The primary structure comprises 962 residues: Leucine--tRNA ligase (962 aa).

Residues 41–51 (PYLNGNLHAGH) carry the 'HIGH' region motif. The 'KMSKS' region signature appears at 631–635 (KMSKS). An ATP-binding site is contributed by Lys-634.

Belongs to the class-I aminoacyl-tRNA synthetase family.

Its subcellular location is the cytoplasm. It catalyses the reaction tRNA(Leu) + L-leucine + ATP = L-leucyl-tRNA(Leu) + AMP + diphosphate. This Methanococcoides burtonii (strain DSM 6242 / NBRC 107633 / OCM 468 / ACE-M) protein is Leucine--tRNA ligase.